The sequence spans 368 residues: MTALGTPIQGVTLYSFTRAFHGREYDLEGLIRKTAADGFGPGLEIIGFSSFRGFPAIDDAYAGWFRDLIDEVGLVTTSLAVNADIGIHRDRLLNQDELIEYMTLQIKAAAKLGFPIARVQISIEPDSMEALAPIAEAHGVTLALEVHADQYASHPRILALRDRYEKVGSPFLGFTMDWGATVSGFAPSLIEAYRRRGASEELLGQVVDLWNTYYEQGPPADQADHGQRFGSFIGLAARHGRPDLGIDFGINGTGLFGPARVDDWRTIAPWIKHVHGKFFGIDENGEEPSVPVRDLVKLLVENGYNGAISSEYEGWHWNYWQSPFDIISDEQAVQRSAAEAAGSRMITDLAEARTQLGAWLPNTEGAHA.

E145 is an a divalent metal cation binding site. The Proton acceptor role is filled by H147. The a divalent metal cation site is built by D177, H275, and E311.

This sequence belongs to the C-glycoside deglycosidase alpha subunit family. As to quaternary structure, heterodimer composed of an alpha subunit (CarB) and a beta subunit (CarC). Requires a divalent metal cation as cofactor.

It catalyses the reaction 3''-dehydroisovitexin = 1,5-anhydro-D-erythro-hex-1-en-3-ulose + apigenin. The enzyme catalyses 3''-dehydroisoorientin = 1,5-anhydro-D-erythro-hex-1-en-3-ulose + luteolin. In terms of biological role, carbon-carbon bond-cleaving enzyme which participates in the metabolism of C-glycosides. Acts on the C6-glycosylated compounds 3''-dehydroisovitexin (3''-oxo-isovitexin) and 3''-dehydroisoorientin (3''-oxo-homoorientin). Shows weak activity with 3'-dehydromangiferin (3'-oxo-mangiferin). The sequence is that of C-glycoside deglycosidase alpha subunit from Microbacterium trichothecenolyticum (Aureobacterium trichothecenolyticum).